The primary structure comprises 206 residues: MFEHYLSLFVKAVFVENMALAFFLGMCTFLAVSKKISSAIGLGIAVVVVLTITVPVNNLILTYLLSEGALTWTGLEGASNIDLSFLGLLSYIGVIAALVQILEMFLDKFVPALYNALGVFLPLITVNCAILGASLFMVERSYDFGESVIYGAGAGVGWALAITALAGIREKLKYSDVPASLQGLGITFITVGLMSLGFMSFSGIQL.

Transmembrane regions (helical) follow at residues 12–32, 36–56, 85–105, 118–138, 148–168, and 184–204; these read AVFVENMALAFFLGMCTFLAV, ISSAIGLGIAVVVVLTITVPV, FLGLLSYIGVIAALVQILEMF, GVFLPLITVNCAILGASLFMV, VIYGAGAGVGWALAITALAGI, and LGITFITVGLMSLGFMSFSGI.

This sequence belongs to the NqrDE/RnfAE family. In terms of assembly, composed of six subunits; NqrA, NqrB, NqrC, NqrD, NqrE and NqrF.

It is found in the cell inner membrane. It catalyses the reaction a ubiquinone + n Na(+)(in) + NADH + H(+) = a ubiquinol + n Na(+)(out) + NAD(+). Its function is as follows. NQR complex catalyzes the reduction of ubiquinone-1 to ubiquinol by two successive reactions, coupled with the transport of Na(+) ions from the cytoplasm to the periplasm. NqrA to NqrE are probably involved in the second step, the conversion of ubisemiquinone to ubiquinol. The sequence is that of Na(+)-translocating NADH-quinone reductase subunit E from Chromohalobacter salexigens (strain ATCC BAA-138 / DSM 3043 / CIP 106854 / NCIMB 13768 / 1H11).